Consider the following 69-residue polypeptide: MKFAIVIEKDEDGYYVVKVPSLPGCHTQAKSLDELMERVKEAIELYLEVKKNVEDGEFIGVQVVEVKTG.

Belongs to the UPF0150 family.

The polypeptide is UPF0150 protein AF_1072 (Archaeoglobus fulgidus (strain ATCC 49558 / DSM 4304 / JCM 9628 / NBRC 100126 / VC-16)).